The chain runs to 530 residues: Phosphoenolpyruvate carboxykinase (ATP) (530 aa).

Substrate contacts are provided by arginine 56, tyrosine 196, and lysine 202. Residues lysine 202, histidine 221, and 237 to 245 (GLSGTGKTT) each bind ATP. Mn(2+) is bound by residues lysine 202 and histidine 221. Position 258 (aspartate 258) interacts with Mn(2+). ATP contacts are provided by residues glutamate 286, arginine 322, 438-439 (RI), and threonine 444. Arginine 322 contacts substrate.

It belongs to the phosphoenolpyruvate carboxykinase (ATP) family. Monomer. It depends on Mn(2+) as a cofactor.

The protein localises to the cytoplasm. It catalyses the reaction oxaloacetate + ATP = phosphoenolpyruvate + ADP + CO2. Its pathway is carbohydrate biosynthesis; gluconeogenesis. Functionally, involved in the gluconeogenesis. Catalyzes the conversion of oxaloacetate (OAA) to phosphoenolpyruvate (PEP) through direct phosphoryl transfer between the nucleoside triphosphate and OAA. This is Phosphoenolpyruvate carboxykinase (ATP) from Photobacterium profundum (strain SS9).